A 255-amino-acid polypeptide reads, in one-letter code: 3-deoxy-manno-octulosonate cytidylyltransferase (255 aa).

This sequence belongs to the KdsB family.

The protein localises to the cytoplasm. The catalysed reaction is 3-deoxy-alpha-D-manno-oct-2-ulosonate + CTP = CMP-3-deoxy-beta-D-manno-octulosonate + diphosphate. Its pathway is nucleotide-sugar biosynthesis; CMP-3-deoxy-D-manno-octulosonate biosynthesis; CMP-3-deoxy-D-manno-octulosonate from 3-deoxy-D-manno-octulosonate and CTP: step 1/1. It participates in bacterial outer membrane biogenesis; lipopolysaccharide biosynthesis. Activates KDO (a required 8-carbon sugar) for incorporation into bacterial lipopolysaccharide in Gram-negative bacteria. The polypeptide is 3-deoxy-manno-octulosonate cytidylyltransferase (Saccharophagus degradans (strain 2-40 / ATCC 43961 / DSM 17024)).